Reading from the N-terminus, the 49-residue chain is Zinc-containing ferredoxin (49 aa).

Residues G1 to T36 are N-terminal extension. Zn(2+) is bound by residues H16 and H19. K29 is subject to N6-methyllysine. Position 34 (H34) interacts with Zn(2+). Residues I37 to G49 are ferredoxin. Residue C45 coordinates [3Fe-4S] cluster.

[3Fe-4S] cluster is required as a cofactor. [4Fe-4S] cluster serves as cofactor. The cofactor is Zn(2+).

Functionally, ferredoxins are iron-sulfur proteins that transfer electrons in a wide variety of metabolic reactions. In Acidianus infernus, this protein is Zinc-containing ferredoxin (zfx).